The chain runs to 515 residues: Mucin-like protein Glc1.8a (515 aa).

An N-terminal signal peptide occupies residues 1–20 (MSQITLIILILAIGFSCTKS). The Extracellular segment spans residues 21 to 467 (HPINSTRDGE…ANDIKKPAFP (447 aa)). Residues asparagine 24, asparagine 45, asparagine 51, asparagine 60, asparagine 85, asparagine 93, asparagine 102, asparagine 123, asparagine 129, asparagine 138, asparagine 180, asparagine 201, asparagine 207, asparagine 216, asparagine 258, asparagine 279, asparagine 285, asparagine 319, asparagine 327, asparagine 336, asparagine 357, asparagine 363, asparagine 372, asparagine 397, asparagine 405, asparagine 413, asparagine 434, and asparagine 441 are each glycosylated (N-linked (GlcNAc...) asparagine; by host). The disordered stretch occupies residues 80-114 (SKKDENITGQSEINTSAKSQPINSTRDGEDSGTDL). Over residues 86–104 (ITGQSEINTSAKSQPINST) the composition is skewed to polar residues. The segment at 314 to 358 (SKKDENVTGQSEINTSAKSQPINSTRDGEDSGTDLKNLLTDPANT) is disordered. A compositionally biased stretch (polar residues) spans 320 to 338 (VTGQSEINTSAKSQPINST). The segment at 393 to 413 (RKDENVTGQSEFNISTNSNLN) is disordered. A helical transmembrane segment spans residues 468 to 488 (YCIILITFQIVTVGMIIYLVF). Topologically, residues 489-515 (RTMRKPCQSERAIPLNTFGFGNNSSHE) are cytoplasmic.

Belongs to the polydnaviridae Glc1.8 protein family.

The protein localises to the host membrane. Functionally, involved in suppression of the insect cellular immune response. Inhibits host hemocyte adhesion and phagocytosis. The chain is Mucin-like protein Glc1.8a (O9) from Microplitis demolitor (Parasitoid wasp).